The following is a 289-amino-acid chain: G1/S-specific cyclin-D2 (289 aa).

Positions 26–151 (LQNLLTIEER…VLGKLKWNLA (126 aa)) constitute a Cyclin N-terminal domain. Residues 264–289 (QHNAGSKSVEDPDQATTPTDVRDVDL) are disordered. At Ser271 the chain carries Phosphoserine. Position 280 is a phosphothreonine (Thr280).

Belongs to the cyclin family. Cyclin D subfamily. In terms of assembly, interacts with either CDK4 or CDK6 protein kinase to form a serine/threonine kinase holoenzyme complex. The cyclin subunit imparts substrate specificity to the complex. In terms of processing, phosphorylation at Thr-280 by MAP kinases is required for ubiquitination and degradation by the DCX(AMBRA1) complex. Post-translationally, ubiquitinated by the DCX(AMBRA1) complex during the transition from G1 to S cell phase, leading to its degradation: ubiquitination is dependent on Thr-280 phosphorylation. The DCX(AMBRA1) complex represents the major regulator of CCND2 stability during the G1/S transition. Polyubiquitinated by the SCF(FBXL2) complex, leading to proteasomal degradation.

It is found in the nucleus. The protein localises to the cytoplasm. The protein resides in the nucleus membrane. Its function is as follows. Regulatory component of the cyclin D2-CDK4 (DC) complex that phosphorylates and inhibits members of the retinoblastoma (RB) protein family including RB1 and regulates the cell-cycle during G(1)/S transition. Phosphorylation of RB1 allows dissociation of the transcription factor E2F from the RB/E2F complex and the subsequent transcription of E2F target genes which are responsible for the progression through the G(1) phase. Hypophosphorylates RB1 in early G(1) phase. Cyclin D-CDK4 complexes are major integrators of various mitogenenic and antimitogenic signals. The chain is G1/S-specific cyclin-D2 from Mus musculus (Mouse).